The following is a 275-amino-acid chain: S-formylglutathione hydrolase (275 aa).

Residues Ser-145, Asp-221, and His-254 each act as charge relay system in the active site.

This sequence belongs to the esterase D family.

It catalyses the reaction S-formylglutathione + H2O = formate + glutathione + H(+). In terms of biological role, serine hydrolase involved in the detoxification of formaldehyde. Hydrolyzes S-formylglutathione to glutathione and formate. The protein is S-formylglutathione hydrolase of Haemophilus influenzae (strain ATCC 51907 / DSM 11121 / KW20 / Rd).